A 959-amino-acid chain; its full sequence is Translation initiation factor IF-2 (959 aa).

The interval 33 to 373 is disordered; sequence SHASSVEEAD…PVTERKFHEL (341 aa). Positions 46 to 60 are enriched in polar residues; the sequence is IASSFSAGVTKNVQA. Residues 63–73 show a composition bias toward basic and acidic residues; it reads AKDKQVAEQKA. Residues 76–100 are compositionally biased toward low complexity; the sequence is AKATTPQPAASKAAEKPAAATQEAS. 3 stretches are compositionally biased toward basic and acidic residues: residues 112–125, 134–143, and 179–192; these read FKAEREARAKEQVA, SNDRKSDYRQ, and NDGHRQAGNRDKNR. Polar residues predominate over residues 193–211; the sequence is SFNANSRQQDIGRQGQTQA. Composition is skewed to basic and acidic residues over residues 234–258 and 266–276; these read ARQRESRFREQEEAKRLEQQARQEA and QTEDKKHREAP. Residues 277-287 show a composition bias toward low complexity; the sequence is AKATEPAEPVA. Basic and acidic residues predominate over residues 306–323; sequence NRPDKAHDRDHGLEDGQK. Positions 328–346 are enriched in low complexity; the sequence is SWNSQNQVRNQKNSNWNNN. Basic residues predominate over residues 347–357; it reads KKNKKGKHHKN. One can recognise a tr-type G domain in the interval 460-629; sequence ERAPVVTIMG…LLVAEVEELK (170 aa). The tract at residues 469-476 is G1; it reads GHVDHGKT. Residue 469-476 coordinates GTP; that stretch reads GHVDHGKT. The G2 stretch occupies residues 494-498; that stretch reads GITQH. The G3 stretch occupies residues 515 to 518; sequence DTPG. Residues 515-519 and 569-572 contribute to the GTP site; these read DTPGH and NKID. A G4 region spans residues 569 to 572; that stretch reads NKID. The tract at residues 605–607 is G5; the sequence is SAK.

This sequence belongs to the TRAFAC class translation factor GTPase superfamily. Classic translation factor GTPase family. IF-2 subfamily.

The protein resides in the cytoplasm. Functionally, one of the essential components for the initiation of protein synthesis. Protects formylmethionyl-tRNA from spontaneous hydrolysis and promotes its binding to the 30S ribosomal subunits. Also involved in the hydrolysis of GTP during the formation of the 70S ribosomal complex. The sequence is that of Translation initiation factor IF-2 from Streptococcus equi subsp. zooepidemicus (strain H70).